Here is a 455-residue protein sequence, read N- to C-terminus: T-box protein VegT-A (455 aa).

Disordered regions lie at residues S21–D40, R229–E262, and A295–S346. The T-box DNA-binding region spans L57–E230. Residues R229 to L241 show a composition bias toward basic and acidic residues. Residues G308–N324 show a composition bias toward polar residues.

As to quaternary structure, forms a repression complex on the promoters of the nodal/nr1 and siamois genes with the maternal factors tcf7l1/tcf3 and pouf5.1/oct-25. Interacts (via C-terminus) with tcf7l1/tcf3 (via N-terminus). Also interacts with the other POU-domain transcription factors pou5f1.2/oct-91 and pou5f1.3/oct-60. Uniformly distributed in stage I oocytes but becomes localized to the vegetal hemisphere by stage II and remains so thereafter throughout oogenesis and the early embryonic cleavage stages. Zygotic expression parallels blastopore formation and shifts from dorsal expression in the marginal zone of late blastula and early gastrula stages to a ventral/lateral expression at the posterior end of later stage embryos. Expression is excluded from the notochord. In tailbud and tadpole stages, expressed exclusively in a subset of posterior Rohon-Beard neurons.

It localises to the nucleus. Transcription factor required for both mesoderm and endoderm formation in the embryo; signaling determinants and concentration levels may determine which germ layer is formed. Acts together with beta-catenin to activate genes that are responsible for mesoderm induction including wnt-8, eomes t/bra, siamois, mix1 and sox17. Directly binds to promoter DNA. Patterns the mesoderm along the dorsoventral and posterior axis. Activates siamois gene transcription when alone or in combination with beta-catenin, but inhibits siamois transcription in combination with pou5f1.1/oct-25. The polypeptide is T-box protein VegT-A (vegt-a) (Xenopus laevis (African clawed frog)).